The primary structure comprises 214 residues: Putative ankyrin repeat protein R844 (214 aa).

5 ANK repeats span residues 41–70 (VEKNMIEHIVENGYLDVLKYIDSLKNQNKF), 81–110 (SLDKYLIMSCEFGHLEMTKYFVSQGANVKT), 111–140 (DNNMPLRLASQNGHIDTIKYLIENSVDVRA), 142–170 (NDCALRMASLFGHINVVKYLVDMGADVTS), and 172–200 (NNFAIIHTARSGRLELAKYLAEKGADIRA).

This is Putative ankyrin repeat protein R844 from Acanthamoeba polyphaga mimivirus (APMV).